The primary structure comprises 245 residues: Probable transcriptional regulatory protein TP_0474 (245 aa).

It belongs to the TACO1 family.

It is found in the cytoplasm. The polypeptide is Probable transcriptional regulatory protein TP_0474 (Treponema pallidum (strain Nichols)).